The sequence spans 581 residues: Putative aluminum-activated malate transporter 3 (581 aa).

The next 6 helical transmembrane spans lie at 98 to 118 (MGLALTLTSILIFFKIPGLEL), 122 to 142 (YLWAILTVVVIFEFSIGATFS), 148 to 164 (GLGTLSAGGLALGMSWI), 167 to 187 (MTGNWADVFNAASIFVVAFFA), 201 to 218 (YGFRVFLLTYCYVIVSGY), and 231 to 251 (FLLIALGASVGLIVNTCIYPI).

Belongs to the aromatic acid exporter (TC 2.A.85) family.

It localises to the membrane. Functionally, malate transporter. In Arabidopsis thaliana (Mouse-ear cress), this protein is Putative aluminum-activated malate transporter 3 (ALMT3).